We begin with the raw amino-acid sequence, 63 residues long: U-reduvitoxin-Pr9a (63 aa).

The first 19 residues, 1-19 (MRFFSLFTFLVAFIAAALA), serve as a signal peptide directing secretion. The propeptide occupies 20–42 (APVEIGEDLFALRPTGAKRDIIL). Cysteine 47 and cysteine 60 are joined by a disulfide.

Expressed by the venom gland.

It localises to the secreted. This Platymeris rhadamanthus (Red spot assassin bug) protein is U-reduvitoxin-Pr9a.